Reading from the N-terminus, the 59-residue chain is MSEKKRVRVRTPGGKELELTPEKTWVLAPKGRKGVKIGLFKDPESGKYFRHKLPDDYPV.

It belongs to the Cren7 family. In terms of assembly, monomer. In terms of processing, methylated at multiple sites, to varying extents.

The protein resides in the chromosome. It is found in the cytoplasm. In terms of biological role, a chromatin protein, binds double-stranded DNA without sequence specificity. Constrains negative DNA supercoils. The sequence is that of Chromatin protein Cren7 from Sulfolobus acidocaldarius (strain ATCC 33909 / DSM 639 / JCM 8929 / NBRC 15157 / NCIMB 11770).